Here is a 397-residue protein sequence, read N- to C-terminus: 2-acyl-1-lysophosphatidylinositol acyltransferase (397 aa).

The short motif at 112–117 (HQIYTD) is the HXXXXD motif element.

Belongs to the 1-acyl-sn-glycerol-3-phosphate acyltransferase family.

It localises to the lipid droplet. The enzyme catalyses 1-heptadecanoyl-sn-glycero-3-phosphate + octadecanoyl-CoA = 1-heptadecanoyl-2-octadecanoyl-sn-glycero-3-phosphate + CoA. It carries out the reaction 1-heptadecanoyl-sn-glycero-3-phosphate + tetradecanoyl-CoA = 1-heptadecanoyl-2-tetradecanoyl-sn-glycero-3-phosphate + CoA. The catalysed reaction is 1-heptadecanoyl-sn-glycero-3-phosphate + hexadecanoyl-CoA = 1-heptadecanoyl-2-hexadecanoyl-sn-glycero-3-phosphate + CoA. Acyltransferase with lysophosphatidic acid acyltransferase (LPAAT) activity. Fatty acyl substrates include 18:0-acyl-CoA, 16:0-acyl-CoA, 17:0-acyl-CoA and 14:0-acyl-CoA. Responsible for the acyl-CoA-dependent introduction of saturated very long chain fatty acids (VLCFAs) into phosphatidylinositol, transferring saturated FAs with 18 to 26 carbon atoms. Responsible for the incorporation of stearate into phosphatidylinositol. Overexpression has an effect on chromosome stability. Regulates phosphorylation and expression of glycerol-3-phosphate acyltransferase SCT1. The chain is 2-acyl-1-lysophosphatidylinositol acyltransferase from Saccharomyces cerevisiae (strain ATCC 204508 / S288c) (Baker's yeast).